We begin with the raw amino-acid sequence, 689 residues long: Glycine--tRNA ligase beta subunit (689 aa).

The protein belongs to the class-II aminoacyl-tRNA synthetase family. In terms of assembly, tetramer of two alpha and two beta subunits.

Its subcellular location is the cytoplasm. It catalyses the reaction tRNA(Gly) + glycine + ATP = glycyl-tRNA(Gly) + AMP + diphosphate. This is Glycine--tRNA ligase beta subunit from Edwardsiella ictaluri (strain 93-146).